Reading from the N-terminus, the 361-residue chain is GDP-mannose 4,6 dehydratase 1 (361 aa).

NADP(+) contacts are provided by residues 23-28, 79-80, 101-105, and Tyr-116; these read GITGQD, DL, and LAAQS. Ser-150 is an active-site residue. Active-site nucleophile residues include Glu-152 and Tyr-173. Residues Lys-177, His-203, and Arg-208 each coordinate NADP(+).

This sequence belongs to the NAD(P)-dependent epimerase/dehydratase family. GDP-mannose 4,6-dehydratase subfamily. In terms of assembly, homotetramer. NADP(+) serves as cofactor. Expressed in roots,stipules and pollen just before anthesis. Primarily localized to the root meristem and columella root cap. Not expressed in emerging lateral roots.

The catalysed reaction is GDP-alpha-D-mannose = GDP-4-dehydro-alpha-D-rhamnose + H2O. The protein operates within nucleotide-sugar biosynthesis; GDP-L-fucose biosynthesis via de novo pathway; GDP-L-fucose from GDP-alpha-D-mannose: step 1/2. Functionally, catalyzes the conversion of GDP-D-mannose to GDP-4-dehydro-6-deoxy-D-mannose. The sequence is that of GDP-mannose 4,6 dehydratase 1 (GMD1) from Arabidopsis thaliana (Mouse-ear cress).